Consider the following 839-residue polypeptide: Conserved oligomeric Golgi complex subunit 6 (839 aa).

It belongs to the COG6 family.

It localises to the golgi apparatus membrane. Acts as a component of the peripheral membrane COG complex that is involved in intra-Golgi protein trafficking. COG is located at the cis-Golgi, and regulates tethering of retrograde intra-Golgi vesicles and possibly a number of other membrane trafficking events. The sequence is that of Conserved oligomeric Golgi complex subunit 6 (COG6) from Saccharomyces cerevisiae (strain YJM789) (Baker's yeast).